The primary structure comprises 357 residues: DNA replication and repair protein RecF (357 aa).

Residue 30-37 (GANGSGKT) coordinates ATP.

It belongs to the RecF family.

The protein localises to the cytoplasm. Functionally, the RecF protein is involved in DNA metabolism; it is required for DNA replication and normal SOS inducibility. RecF binds preferentially to single-stranded, linear DNA. It also seems to bind ATP. This is DNA replication and repair protein RecF from Escherichia coli O7:K1 (strain IAI39 / ExPEC).